Here is a 163-residue protein sequence, read N- to C-terminus: MPSFDIVSEVDLQEARNGVDNAVREVESRFDFRGVEATIELNDANKTIKVLSESDFQVNQLLDILRAKLLKRGIEGASLDVSDEFVHSGKTWYVEAKLKQGIESAVQKKIVKLIKDSKLKVQAQIQGEEIRVTGKSRDDLQSVMALVRGGDLGQPFQFKNFRD.

This sequence belongs to the YajQ family.

In terms of biological role, nucleotide-binding protein. This chain is Nucleotide-binding protein YajQ, found in Salmonella heidelberg (strain SL476).